The sequence spans 103 residues: NADH-quinone oxidoreductase subunit K (103 aa).

Transmembrane regions (helical) follow at residues 5–25 (VPTSYYLALSGVLFALGLIGV), 32–52 (ILIFLSVELMLNAANIALVAF), and 66–86 (FIVMTLAAAEVAIGLAIIVAI).

The protein belongs to the complex I subunit 4L family. As to quaternary structure, NDH-1 is composed of 15 different subunits. Subunits NuoA, H, J, K, L, M, N constitute the membrane sector of the complex.

It is found in the cell membrane. The catalysed reaction is a quinone + NADH + 5 H(+)(in) = a quinol + NAD(+) + 4 H(+)(out). Functionally, NDH-1 shuttles electrons from NADH, via FMN and iron-sulfur (Fe-S) centers, to quinones in the respiratory chain. The immediate electron acceptor for the enzyme in this species is believed to be a menaquinone. Couples the redox reaction to proton translocation (for every two electrons transferred, four hydrogen ions are translocated across the cytoplasmic membrane), and thus conserves the redox energy in a proton gradient. The protein is NADH-quinone oxidoreductase subunit K of Deinococcus radiodurans (strain ATCC 13939 / DSM 20539 / JCM 16871 / CCUG 27074 / LMG 4051 / NBRC 15346 / NCIMB 9279 / VKM B-1422 / R1).